The primary structure comprises 179 residues: Large ribosomal subunit protein uL5 (179 aa).

The protein belongs to the universal ribosomal protein uL5 family. As to quaternary structure, part of the 50S ribosomal subunit; part of the 5S rRNA/L5/L18/L25 subcomplex. Contacts the 5S rRNA and the P site tRNA. Forms a bridge to the 30S subunit in the 70S ribosome.

This is one of the proteins that bind and probably mediate the attachment of the 5S RNA into the large ribosomal subunit, where it forms part of the central protuberance. In the 70S ribosome it contacts protein S13 of the 30S subunit (bridge B1b), connecting the 2 subunits; this bridge is implicated in subunit movement. Contacts the P site tRNA; the 5S rRNA and some of its associated proteins might help stabilize positioning of ribosome-bound tRNAs. The chain is Large ribosomal subunit protein uL5 from Bdellovibrio bacteriovorus (strain ATCC 15356 / DSM 50701 / NCIMB 9529 / HD100).